The following is a 246-amino-acid chain: 2,3-bisphosphoglycerate-dependent phosphoglycerate mutase (246 aa).

Residues 9–16 (RHGQSAWN), 22–23 (TG), Arg61, 88–91 (ERHY), Lys99, 115–116 (RR), and 181–182 (GN) contribute to the substrate site. The active-site Tele-phosphohistidine intermediate is the His10. Catalysis depends on Glu88, which acts as the Proton donor/acceptor.

This sequence belongs to the phosphoglycerate mutase family. BPG-dependent PGAM subfamily.

It catalyses the reaction (2R)-2-phosphoglycerate = (2R)-3-phosphoglycerate. It participates in carbohydrate degradation; glycolysis; pyruvate from D-glyceraldehyde 3-phosphate: step 3/5. In terms of biological role, catalyzes the interconversion of 2-phosphoglycerate and 3-phosphoglycerate. This is 2,3-bisphosphoglycerate-dependent phosphoglycerate mutase from Bifidobacterium longum (strain DJO10A).